We begin with the raw amino-acid sequence, 258 residues long: Imidazole glycerol phosphate synthase subunit HisF (258 aa).

Catalysis depends on residues D12 and D131.

It belongs to the HisA/HisF family. In terms of assembly, heterodimer of HisH and HisF.

Its subcellular location is the cytoplasm. It catalyses the reaction 5-[(5-phospho-1-deoxy-D-ribulos-1-ylimino)methylamino]-1-(5-phospho-beta-D-ribosyl)imidazole-4-carboxamide + L-glutamine = D-erythro-1-(imidazol-4-yl)glycerol 3-phosphate + 5-amino-1-(5-phospho-beta-D-ribosyl)imidazole-4-carboxamide + L-glutamate + H(+). It participates in amino-acid biosynthesis; L-histidine biosynthesis; L-histidine from 5-phospho-alpha-D-ribose 1-diphosphate: step 5/9. Its function is as follows. IGPS catalyzes the conversion of PRFAR and glutamine to IGP, AICAR and glutamate. The HisF subunit catalyzes the cyclization activity that produces IGP and AICAR from PRFAR using the ammonia provided by the HisH subunit. This is Imidazole glycerol phosphate synthase subunit HisF from Sinorhizobium fredii (strain NBRC 101917 / NGR234).